An 889-amino-acid chain; its full sequence is DNA gyrase subunit A (889 aa).

In terms of domain architecture, Topo IIA-type catalytic spans 35 to 501 (LPDVRDGLKP…GFEDLEDEDL (467 aa)). Y123 functions as the O-(5'-phospho-DNA)-tyrosine intermediate in the catalytic mechanism. Residues 528-534 (QNRGGRG) carry the GyrA-box motif. The interval 810–889 (VKEDAEDETN…IQQSSDEDEE (80 aa)) is disordered. Residues 813–823 (DAEDETNEDEQ) are compositionally biased toward acidic residues. Residues 863-875 (DGRIEVRQDFMDR) show a composition bias toward basic and acidic residues. Over residues 876–889 (VEEDIQQSSDEDEE) the composition is skewed to acidic residues.

Belongs to the type II topoisomerase GyrA/ParC subunit family. In terms of assembly, heterotetramer, composed of two GyrA and two GyrB chains. In the heterotetramer, GyrA contains the active site tyrosine that forms a transient covalent intermediate with DNA, while GyrB binds cofactors and catalyzes ATP hydrolysis.

It is found in the cytoplasm. The catalysed reaction is ATP-dependent breakage, passage and rejoining of double-stranded DNA.. Functionally, a type II topoisomerase that negatively supercoils closed circular double-stranded (ds) DNA in an ATP-dependent manner to modulate DNA topology and maintain chromosomes in an underwound state. Negative supercoiling favors strand separation, and DNA replication, transcription, recombination and repair, all of which involve strand separation. Also able to catalyze the interconversion of other topological isomers of dsDNA rings, including catenanes and knotted rings. Type II topoisomerases break and join 2 DNA strands simultaneously in an ATP-dependent manner. The chain is DNA gyrase subunit A from Staphylococcus aureus (strain N315).